The sequence spans 358 residues: Aminomethyltransferase (358 aa).

It belongs to the GcvT family. As to quaternary structure, the glycine cleavage system is composed of four proteins: P, T, L and H.

It catalyses the reaction N(6)-[(R)-S(8)-aminomethyldihydrolipoyl]-L-lysyl-[protein] + (6S)-5,6,7,8-tetrahydrofolate = N(6)-[(R)-dihydrolipoyl]-L-lysyl-[protein] + (6R)-5,10-methylene-5,6,7,8-tetrahydrofolate + NH4(+). Its function is as follows. The glycine cleavage system catalyzes the degradation of glycine. The polypeptide is Aminomethyltransferase (Francisella philomiragia subsp. philomiragia (strain ATCC 25017 / CCUG 19701 / FSC 153 / O#319-036)).